Consider the following 421-residue polypeptide: UDP-N-acetylglucosamine 1-carboxyvinyltransferase 1 (421 aa).

22–23 contacts phosphoenolpyruvate; it reads KN. R95 contributes to the UDP-N-acetyl-alpha-D-glucosamine binding site. C119 (proton donor) is an active-site residue. C119 carries the 2-(S-cysteinyl)pyruvic acid O-phosphothioketal modification. UDP-N-acetyl-alpha-D-glucosamine-binding positions include 124 to 128, D308, and V330; that span reads RPIEQ.

The protein belongs to the EPSP synthase family. MurA subfamily.

It is found in the cytoplasm. It catalyses the reaction phosphoenolpyruvate + UDP-N-acetyl-alpha-D-glucosamine = UDP-N-acetyl-3-O-(1-carboxyvinyl)-alpha-D-glucosamine + phosphate. It functions in the pathway cell wall biogenesis; peptidoglycan biosynthesis. In terms of biological role, cell wall formation. Adds enolpyruvyl to UDP-N-acetylglucosamine. This Staphylococcus epidermidis (strain ATCC 35984 / DSM 28319 / BCRC 17069 / CCUG 31568 / BM 3577 / RP62A) protein is UDP-N-acetylglucosamine 1-carboxyvinyltransferase 1.